The primary structure comprises 426 residues: Serine--tRNA ligase (426 aa).

Residue 230-232 participates in L-serine binding; sequence TAE. 261-263 lines the ATP pocket; sequence RSE. An L-serine-binding site is contributed by Glu-284. Position 348–351 (348–351) interacts with ATP; it reads EISS. Residue Ser-384 coordinates L-serine.

The protein belongs to the class-II aminoacyl-tRNA synthetase family. Type-1 seryl-tRNA synthetase subfamily. As to quaternary structure, homodimer. The tRNA molecule binds across the dimer.

It localises to the cytoplasm. The catalysed reaction is tRNA(Ser) + L-serine + ATP = L-seryl-tRNA(Ser) + AMP + diphosphate + H(+). It carries out the reaction tRNA(Sec) + L-serine + ATP = L-seryl-tRNA(Sec) + AMP + diphosphate + H(+). Its pathway is aminoacyl-tRNA biosynthesis; selenocysteinyl-tRNA(Sec) biosynthesis; L-seryl-tRNA(Sec) from L-serine and tRNA(Sec): step 1/1. Functionally, catalyzes the attachment of serine to tRNA(Ser). Is also able to aminoacylate tRNA(Sec) with serine, to form the misacylated tRNA L-seryl-tRNA(Sec), which will be further converted into selenocysteinyl-tRNA(Sec). The chain is Serine--tRNA ligase from Novosphingobium aromaticivorans (strain ATCC 700278 / DSM 12444 / CCUG 56034 / CIP 105152 / NBRC 16084 / F199).